Reading from the N-terminus, the 322-residue chain is Coelomocyte uptake defective protein 15 (322 aa).

The first 20 residues, 1–20 (MVNSLSRILFCSLLIFSVIS), serve as a signal peptide directing secretion. 7 N-linked (GlcNAc...) asparagine glycosylation sites follow: Asn62, Asn98, Asn144, Asn170, Asn180, Asn183, and Asn222. Residues 244–264 (LFGIMITFGTLLLLTALFYAA) form a helical membrane-spanning segment.

It belongs to the OSTM1 family.

Its subcellular location is the membrane. Functionally, modulates the transport of substances from the endosomal to lysosomal compartments. Plays a role in lysosome formation and function in coelomocytes. The chain is Coelomocyte uptake defective protein 15 from Caenorhabditis elegans.